We begin with the raw amino-acid sequence, 67 residues long: Conotoxin AbVIO (67 aa).

The N-terminal stretch at 1 to 17 (VIIIAVLFLTACQLIAT) is a signal peptide. A propeptide spanning residues 18 to 40 (ASYARSERKHPDLRLSSRNSKLS) is cleaved from the precursor. 3 disulfide bridges follow: cysteine 43–cysteine 57, cysteine 50–cysteine 61, and cysteine 56–cysteine 66.

This sequence belongs to the conotoxin O1 superfamily. Expressed by the venom duct.

It is found in the secreted. The chain is Conotoxin AbVIO from Conus abbreviatus (Abbreviated cone).